A 95-amino-acid chain; its full sequence is Putative monooxygenase YcnE (95 aa).

One can recognise an ABM domain in the interval 2 to 93 (IVLQAYIKVK…APLDVVRTEL (92 aa)). Ser-24 bears the Phosphoserine mark.

It belongs to the LsrG family.

Putative monooxygenase that may contribute to the degradation of aromatic compounds. The sequence is that of Putative monooxygenase YcnE (ycnE) from Bacillus subtilis (strain 168).